We begin with the raw amino-acid sequence, 456 residues long: Gustatory receptor for sugar taste 64a (456 aa).

Residues 1–30 (MKGPNLNFRKTPSKDNGVKQVESLARPETP) form a disordered region. The Cytoplasmic portion of the chain corresponds to 1 to 91 (MKGPNLNFRK…RESNPRRVRF (91 aa)). A helical transmembrane segment spans residues 92-114 (AYKSIPMFVTLIFMIATSILFLS). Topologically, residues 115 to 128 (MFTHLLKIGITAKN) are extracellular. The helical transmembrane segment at 129-150 (FVGLVFFGCVLSAYVVFIRLAK) threads the bilayer. Gly131 contributes to the sucrose binding site. The Cytoplasmic segment spans residues 151–182 (KWPAVVRIWTRTEIPFTKPPYEIPKRNLSRRV). The helical transmembrane segment at 183 to 205 (QLAALAIIGLSLGEHALYQVSAI) threads the bilayer. Sucrose-binding residues include Glu196, His197, and Tyr234. Glu196, His197, Tyr234, Asn253, and Thr257 together coordinate D-maltose. The Extracellular segment spans residues 206–245 (LSYTRRIQMCANITTVPSFNNYMQTNYDYVFQLLPYSPII). A helical transmembrane segment spans residues 246–271 (AVLILLINGACTFVWNYMDLFIMMIS). Residue Thr257 participates in sucrose binding. Topologically, residues 272 to 318 (KGLSYRFEQITTRIRKLEHEEVCESVFIQIREHYVKMCELLEFVDSA) are cytoplasmic. The helical transmembrane segment at 319–342 (MSSLILLSCVNNLYFVCYQLLNVF) threads the bilayer. Topologically, residues 343 to 350 (NKLRWPIN) are extracellular. The helical transmembrane segment at 351–373 (YIYFWYSLLYLIGRTAFVFLTAA) threads the bilayer. Tyr353 is a binding site for sucrose. Residue Tyr353 participates in D-maltose binding. The Cytoplasmic segment spans residues 374–421 (DINEESKRGLGVLRRVSSRSWCVEVERLIFQMTTQTVALSGKKFYFLT). Residues 422–441 (RRLLFGMAGTIVTYELVLLQ) form a helical membrane-spanning segment. Over 442-456 (FDEPNRRKGLQPLCA) the chain is Extracellular.

Belongs to the insect chemoreceptor superfamily. Gustatory receptor (GR) family. Gr5a subfamily. As to quaternary structure, homotetramer. In terms of tissue distribution, expressed in Gr5a-expressing sugar-sensing cells.

It localises to the cell membrane. Its function is as follows. One of the few identified sugar gustatory receptors identified so far and which promotes the starvation-induced increase of feeding motivation. Required in combination with Gr64f to detect sucrose, maltose, and glucose. The protein is Gustatory receptor for sugar taste 64a (Gr64a) of Drosophila melanogaster (Fruit fly).